The following is a 284-amino-acid chain: Homeobox protein SIX1 (284 aa).

The homeobox DNA-binding region spans 124-183; sequence GEETSYCFKEKSRGVLREWYAHNPYPSPREKRELAEATGLTTTQVSNWFKNRRQRDRAAE. Positions 168–284 are disordered; it reads VSNWFKNRRQ…LTSSLVDLGS (117 aa). The span at 179 to 190 shows a compositional bias: basic and acidic residues; that stretch reads DRAAEAKERENT. Over residues 227–284 the composition is skewed to polar residues; sequence DQNSVLLLQSNMGHARSSNYSLPGLTASQPSHGLQAHQHQLQDSLLGPLTSSLVDLGS.

This sequence belongs to the SIX/Sine oculis homeobox family. Interacts with DACH1. Interacts with EYA1. Interacts with EYA2. Interacts with CDH1. Interacts with TBX18. Interacts with CEBPA. Interacts with CEBPB. Interacts with EBF2. In terms of processing, phosphorylated during interphase; becomes hyperphosphorylated during mitosis. Hyperphosphorylation impairs binding to promoter elements. Post-translationally, ubiquitinated by the anaphase promoting complex (APC), leading to its proteasomal degradation. In terms of tissue distribution, expressed in phalangeal tendons and in skeletal muscle and in head and body mesenchyme.

The protein resides in the nucleus. The protein localises to the cytoplasm. Functionally, transcription factor that is involved in the regulation of cell proliferation, apoptosis and embryonic development. Plays an important role in the development of several organs, including kidney, muscle and inner ear. Depending on context, functions as a transcriptional repressor or activator. Lacks an activation domain, and requires interaction with EYA family members for transcription activation. Mediates nuclear translocation of EYA1 and EYA2. Binds the 5'-TCA[AG][AG]TTNC-3' motif present in the MEF3 element in the MYOG promoter and CIDEA enhancer. Regulates the expression of numerous genes, including MYC, CCNA1, CCND1 and EZR. Acts as an activator of the IGFBP5 promoter, probably coactivated by EYA2. Repression of precursor cell proliferation in myoblasts is switched to activation through recruitment of EYA3 to the SIX1-DACH1 complex. During myogenesis, seems to act together with EYA2 and DACH2. Regulates the expression of CCNA1. Promotes brown adipocyte differentiation. The sequence is that of Homeobox protein SIX1 (Six1) from Mus musculus (Mouse).